The sequence spans 311 residues: Probable mitochondrial phosphate carrier protein (311 aa).

Over 1–23 the chain is Mitochondrial intermembrane; that stretch reads MSTPLIPPAPPKKTLQLYTPQYY. Solcar repeat units follow at residues 21-105, 118-203, and 219-303; these read QYYG…FKHK, YRTS…IVEA, and EKIG…FKIM. The chain crosses the membrane as a helical span at residues 24–44; it reads GLCTLGGLLACGTTHSAITPL. Residues 45-67 lie on the Mitochondrial matrix side of the membrane; sequence DLIKCRKQVNPNIYPGNIAGFKT. The helical transmembrane segment at 68–88 threads the bilayer; it reads ILSKEGLRGLYTGGMPTLIGY. The Mitochondrial intermembrane segment spans residues 89–120; the sequence is SLQGCGKYGFYELFKHKYSTLVGAQKAHEYRT. A helical membrane pass occupies residues 121–141; sequence SIYLAASASAELLADIMLCPM. Over 142-171 the chain is Mitochondrial matrix; it reads EAIKVRVQTSNPRFANTTREAWSKIVTNEG. The chain crosses the membrane as a helical span at residues 172–192; sequence FGTLYRGLAPLWFRQIPYTMM. Residues 193–220 are Mitochondrial intermembrane-facing; it reads KFASFERIVEALYTYIGKPKNMYSKAEK. Residues 221–241 form a helical membrane-spanning segment; the sequence is IGISFAGGYMAGVLCAIISHP. Topologically, residues 242–269 are mitochondrial matrix; it reads ADVMVSKLNSNKKAGEGAGAAAARIYKE. The helical transmembrane segment at 270-290 threads the bilayer; that stretch reads IGFSGLWNGLGVRIVMIGTLT. Residues 291–311 are Mitochondrial intermembrane-facing; sequence GAQWLIYDSFKIMCGFPATGA.

This sequence belongs to the mitochondrial carrier (TC 2.A.29) family.

Its subcellular location is the mitochondrion inner membrane. Transport of phosphate groups from the cytosol to the mitochondrial matrix. The chain is Probable mitochondrial phosphate carrier protein from Schizosaccharomyces pombe (strain 972 / ATCC 24843) (Fission yeast).